Reading from the N-terminus, the 405-residue chain is Glutamate-pyruvate aminotransferase AlaA (405 aa).

Residues glycine 41 and asparagine 179 each coordinate L-alanine. Residue lysine 240 is modified to N6-(pyridoxal phosphate)lysine. Residue arginine 378 participates in L-alanine binding.

This sequence belongs to the class-I pyridoxal-phosphate-dependent aminotransferase family. Homodimer. Pyridoxal 5'-phosphate is required as a cofactor.

Its subcellular location is the cytoplasm. It catalyses the reaction L-alanine + 2-oxoglutarate = pyruvate + L-glutamate. It participates in amino-acid biosynthesis; L-alanine biosynthesis. In terms of biological role, involved in the biosynthesis of alanine. Catalyzes the transamination of pyruvate by glutamate, leading to the formation of L-alanine and 2-oxoglutarate. Is also able to catalyze the reverse reaction. In Escherichia coli (strain K12), this protein is Glutamate-pyruvate aminotransferase AlaA.